The primary structure comprises 606 residues: NADH-ubiquinone oxidoreductase chain 5 (606 aa).

16 helical membrane-spanning segments follow: residues 1-21 (MNLF…PIIM), 43-63 (AFII…EAII), 88-108 (IFIP…MWYM), 117-137 (FFKY…ANNL), 140-160 (LFIG…WWYG), 171-191 (AILY…WFLT), 209-229 (LNIP…QFGL), 241-261 (TPVS…FLLI), 273-293 (MQTL…ICAL), 310-330 (LGLM…LHIC), 366-386 (MPFT…MPFL), 413-433 (LIAT…VLLG), 457-477 (LLIG…PTTI), 488-508 (LTAL…NLAA), 513-533 (FMYP…PIVM), and 582-602 (GLVK…LILL).

The protein belongs to the complex I subunit 5 family. Core subunit of respiratory chain NADH dehydrogenase (Complex I) which is composed of 45 different subunits.

The protein resides in the mitochondrion inner membrane. It carries out the reaction a ubiquinone + NADH + 5 H(+)(in) = a ubiquinol + NAD(+) + 4 H(+)(out). Core subunit of the mitochondrial membrane respiratory chain NADH dehydrogenase (Complex I) which catalyzes electron transfer from NADH through the respiratory chain, using ubiquinone as an electron acceptor. Essential for the catalytic activity and assembly of complex I. The chain is NADH-ubiquinone oxidoreductase chain 5 (MT-ND5) from Felis catus (Cat).